Here is a 156-residue protein sequence, read N- to C-terminus: ATP synthase subunit b (156 aa).

Residues 12-32 form a helical membrane-spanning segment; that stretch reads VAFLIFVLFCMKFVWPPVIAA.

This sequence belongs to the ATPase B chain family. In terms of assembly, F-type ATPases have 2 components, F(1) - the catalytic core - and F(0) - the membrane proton channel. F(1) has five subunits: alpha(3), beta(3), gamma(1), delta(1), epsilon(1). F(0) has three main subunits: a(1), b(2) and c(10-14). The alpha and beta chains form an alternating ring which encloses part of the gamma chain. F(1) is attached to F(0) by a central stalk formed by the gamma and epsilon chains, while a peripheral stalk is formed by the delta and b chains.

Its subcellular location is the cell inner membrane. In terms of biological role, f(1)F(0) ATP synthase produces ATP from ADP in the presence of a proton or sodium gradient. F-type ATPases consist of two structural domains, F(1) containing the extramembraneous catalytic core and F(0) containing the membrane proton channel, linked together by a central stalk and a peripheral stalk. During catalysis, ATP synthesis in the catalytic domain of F(1) is coupled via a rotary mechanism of the central stalk subunits to proton translocation. Functionally, component of the F(0) channel, it forms part of the peripheral stalk, linking F(1) to F(0). This is ATP synthase subunit b from Pseudomonas fluorescens (strain Pf0-1).